The sequence spans 293 residues: ELMO domain-containing protein 2 (293 aa).

Residues 126 to 282 (QHEKMLLKLW…KFHERIKGLL (157 aa)) enclose the ELMO domain.

In terms of biological role, acts as a GTPase-activating protein (GAP) toward guanine nucleotide exchange factors like ARL2, ARL3, ARF1 and ARF6, but not for GTPases outside the Arf family. This Mus musculus (Mouse) protein is ELMO domain-containing protein 2 (Elmod2).